Reading from the N-terminus, the 629-residue chain is Forkhead box protein O1-B (629 aa).

4 disordered regions span residues 1 to 54, 88 to 134, 211 to 308, and 359 to 397; these read MAEP…PEQG, CAHP…SRRN, SWWM…SPFL, and KNNT…QPQV. Polar residues predominate over residues 36 to 46; sequence QPGNSNTSSPA. 2 stretches are compositionally biased toward low complexity: residues 90–107 and 115–133; these read HPQQ…THPQ and PASG…SSRR. The segment at residues 136–230 is a DNA-binding region (fork-head); sequence WGNMSYADLI…KSGKSPRRRA (95 aa). Basic residues predominate over residues 240-251; that stretch reads TKSRGRAAKKKM. Composition is skewed to polar residues over residues 291–302, 359–377, and 385–397; these read TRASSDASTLSG, KNNT…SPLM, and SYTS…QPQV.

Its subcellular location is the cytoplasm. The protein localises to the nucleus. Its function is as follows. Transcription factor that regulates metabolic homeostasis in response to oxidative stress. Binds to the consensus sequence 5'-TT[G/A]TTTTG-3' and the related Daf-16 family binding element (DBE) with consensus sequence 5'-TT[G/A]TTTAC-3'. Main regulator of redox balance and osteoblast numbers and controls bone mass. Orchestrates the endocrine function of the skeleton in regulating glucose metabolism. May act as a positive regulator of apoptosis in cardiac smooth muscle cells as a result of its transcriptional activation of pro-apoptotic genes. The chain is Forkhead box protein O1-B (foxo1b) from Danio rerio (Zebrafish).